The primary structure comprises 375 residues: Nucleolysin TIAR (375 aa).

RRM domains are found at residues 9-85 and 97-175; these read RTLY…WATT and FHVF…WATR. N6-acetyllysine is present on Lys122. Phosphoserine is present on Ser201. Positions 205–277 constitute an RRM 3 domain; sequence CTVYCGGIAS…HVVKCYWGKE (73 aa). Residues 345–375 are disordered; that stretch reads FGAQPPQGQAPPPVIPPPNQAGYGMASYQTQ. The span at 352–363 shows a compositional bias: pro residues; the sequence is GQAPPPVIPPPN.

As to quaternary structure, interacts with FASTK. In terms of processing, phosphorylated by MAPK14 following DNA damage, releasing TIAR from GADD45A mRNA. As to expression, expressed in brain, heart, kidney, lung and skeletal muscle.

The protein resides in the nucleus. Its subcellular location is the cytoplasm. The protein localises to the cytolytic granule. It localises to the stress granule. Its function is as follows. RNA-binding protein involved in alternative pre-RNA splicing and in cytoplasmic stress granules formation. Shows a preference for uridine-rich RNAs. Activates splicing of alternative exons with weak 5' splice sites followed by a U-rich stretch on its own pre-mRNA and on TIA1 mRNA. Promotes the inclusion of TIA1 exon 5 to give rise to the long isoform (isoform a) of TIA1. Acts downstream of the stress-induced phosphorylation of EIF2S1/EIF2A to promote the recruitment of untranslated mRNAs to cytoplasmic stress granules (SG). Possesses nucleolytic activity against cytotoxic lymphocyte target cells. May be involved in apoptosis. The protein is Nucleolysin TIAR (TIAL1) of Homo sapiens (Human).